The following is a 477-amino-acid chain: Glycogen synthase (477 aa).

Lys15 provides a ligand contact to ADP-alpha-D-glucose.

The protein belongs to the glycosyltransferase 1 family. Bacterial/plant glycogen synthase subfamily.

It catalyses the reaction [(1-&gt;4)-alpha-D-glucosyl](n) + ADP-alpha-D-glucose = [(1-&gt;4)-alpha-D-glucosyl](n+1) + ADP + H(+). Its pathway is glycan biosynthesis; glycogen biosynthesis. Synthesizes alpha-1,4-glucan chains using ADP-glucose. In Mannheimia succiniciproducens (strain KCTC 0769BP / MBEL55E), this protein is Glycogen synthase.